A 262-amino-acid chain; its full sequence is Phosphonates import ATP-binding protein PhnC 3 (262 aa).

One can recognise an ABC transporter domain in the interval 3–245; it reads IQLECLSVTY…ELNRIYGNAE (243 aa). 36–43 is an ATP binding site; that stretch reads GASGSGKS.

This sequence belongs to the ABC transporter superfamily. Phosphonates importer (TC 3.A.1.9.1) family. The complex is composed of two ATP-binding proteins (PhnC), two transmembrane proteins (PhnE) and a solute-binding protein (PhnD).

Its subcellular location is the cell inner membrane. The catalysed reaction is phosphonate(out) + ATP + H2O = phosphonate(in) + ADP + phosphate + H(+). Functionally, part of the ABC transporter complex PhnCDE involved in phosphonates import. Responsible for energy coupling to the transport system. This chain is Phosphonates import ATP-binding protein PhnC 3, found in Nostoc sp. (strain PCC 7120 / SAG 25.82 / UTEX 2576).